The chain runs to 311 residues: Olfactory receptor 10G4 (311 aa).

Residues 1-23 (MSNASLVTAFILTGLPHAPGLDA) are Extracellular-facing. An N-linked (GlcNAc...) asparagine glycan is attached at asparagine 3. The helical transmembrane segment at 24–44 (LLFGIFLVVYVLTVLGNLLIL) threads the bilayer. The Cytoplasmic segment spans residues 45–52 (LVIRVDSH). The helical transmembrane segment at 53 to 73 (LHTPMYYFLTNLSFIDMWFST) threads the bilayer. Residues 74–98 (VTVPKMLMTLVSPSGRAISFHSCVA) lie on the Extracellular side of the membrane. Cysteines 96 and 188 form a disulfide. A helical membrane pass occupies residues 99–119 (QLYFFHFLGSTECFLYTVMSY). Over 120 to 138 (DRYLAISYPLRYTSMMSGS) the chain is Cytoplasmic. A helical membrane pass occupies residues 139–159 (RCALLATGTWLSGSLHSAVQT). Residues 160-196 (ILTFHLPYCGPNQIQHYFCDAPPILKLACADTSANVM) are Extracellular-facing. Residues 197 to 216 (VIFVDIGIVASGCFVLIVLS) form a helical membrane-spanning segment. Residues 217 to 236 (YVSIVCSILRIRTSDGRRRA) lie on the Cytoplasmic side of the membrane. A helical membrane pass occupies residues 237-257 (FQTCASHCIVVLCFFVPCVVI). Topologically, residues 258–268 (YLRPGSMDAMD) are extracellular. Residues 269–289 (GVVAIFYTVLTPLLNPVVYTL) form a helical membrane-spanning segment. The Cytoplasmic segment spans residues 290-311 (RNKEVKKAVLKLRDKVAHPQRK).

It belongs to the G-protein coupled receptor 1 family.

The protein localises to the cell membrane. Its function is as follows. Odorant receptor. The protein is Olfactory receptor 10G4 (OR10G4) of Homo sapiens (Human).